Reading from the N-terminus, the 68-residue chain is Small ribosomal subunit protein bS21 (68 aa).

Residues 36–68 (YEKPSEKRARERAAAVRRSRKLERKRAERDGIR) form a disordered region. The span at 37–49 (EKPSEKRARERAA) shows a compositional bias: basic and acidic residues. Residues 50-59 (AVRRSRKLER) show a composition bias toward basic residues.

This sequence belongs to the bacterial ribosomal protein bS21 family.

This is Small ribosomal subunit protein bS21 from Zymomonas mobilis subsp. mobilis (strain ATCC 31821 / ZM4 / CP4).